The following is a 225-amino-acid chain: uncharacterized protein (225 aa).

N-linked (GlcNAc...) asparagine; by host glycans are attached at residues Asn48, Asn58, Asn105, and Asn108. A helical transmembrane segment spans residues 156 to 178 (LWGYLKQPLVMVGIAAVVGYLIY).

Belongs to the ascovirus HvAv ORF58 family.

The protein resides in the membrane. This is an uncharacterized protein from Heliothis virescens ascovirus 3e (HvAV-3e).